Reading from the N-terminus, the 129-residue chain is Glycerol-3-phosphate cytidylyltransferase (129 aa).

CTP-binding positions include 9–10 and 14–17; these read TF and HYGH. Lysine 44 is a binding site for substrate. Lysine 46 contacts CTP. Residue lysine 77 coordinates substrate. A CTP-binding site is contributed by 113-120; sequence RTDGISTT.

Belongs to the cytidylyltransferase family. In terms of assembly, homodimer.

The protein localises to the cytoplasm. It carries out the reaction sn-glycerol 3-phosphate + CTP + H(+) = CDP-glycerol + diphosphate. It functions in the pathway cell wall biogenesis; poly(ribitol phosphate) teichoic acid biosynthesis. Its function is as follows. Catalyzes the transfer of the cytidylyl group of CTP to sn-glycerol 3-phosphate so the activated glycerol 3-phosphate can be used for teichoic acid synthesis, via incorporation into both the linkage unit by TarB and TarF. This chain is Glycerol-3-phosphate cytidylyltransferase (tarD), found in Bacillus spizizenii (strain ATCC 23059 / NRRL B-14472 / W23) (Bacillus subtilis subsp. spizizenii).